Reading from the N-terminus, the 717-residue chain is DNA ligase (717 aa).

NAD(+) is bound by residues 44–48 (DAEYD), 93–94 (SL), and E127. K129 acts as the N6-AMP-lysine intermediate in catalysis. 4 residues coordinate NAD(+): R150, E186, K302, and K326. 4 residues coordinate Zn(2+): C431, C434, C455, and C461. The BRCT domain occupies 639–717 (TSGSPVVGKT…EDEWLELIGG (79 aa)).

It belongs to the NAD-dependent DNA ligase family. LigA subfamily. Mg(2+) is required as a cofactor. Requires Mn(2+) as cofactor.

The catalysed reaction is NAD(+) + (deoxyribonucleotide)n-3'-hydroxyl + 5'-phospho-(deoxyribonucleotide)m = (deoxyribonucleotide)n+m + AMP + beta-nicotinamide D-nucleotide.. In terms of biological role, DNA ligase that catalyzes the formation of phosphodiester linkages between 5'-phosphoryl and 3'-hydroxyl groups in double-stranded DNA using NAD as a coenzyme and as the energy source for the reaction. It is essential for DNA replication and repair of damaged DNA. This chain is DNA ligase, found in Rhizobium rhizogenes (strain K84 / ATCC BAA-868) (Agrobacterium radiobacter).